The sequence spans 55 residues: MPQLNPNPWFFIMLLSWLTFSLIIQPKLLSFTPTNPPSNKTTTHTKTTPWTWPWT.

Residues 7–24 (NPWFFIMLLSWLTFSLII) form a helical membrane-spanning segment. The segment at 35–55 (NPPSNKTTTHTKTTPWTWPWT) is disordered. A compositionally biased stretch (low complexity) spans 37–55 (PSNKTTTHTKTTPWTWPWT).

This sequence belongs to the ATPase protein 8 family. As to quaternary structure, component of the ATP synthase complex composed at least of ATP5F1A/subunit alpha, ATP5F1B/subunit beta, ATP5MC1/subunit c (homooctomer), MT-ATP6/subunit a, MT-ATP8/subunit 8, ATP5ME/subunit e, ATP5MF/subunit f, ATP5MG/subunit g, ATP5MK/subunit k, ATP5MJ/subunit j, ATP5F1C/subunit gamma, ATP5F1D/subunit delta, ATP5F1E/subunit epsilon, ATP5PF/subunit F6, ATP5PB/subunit b, ATP5PD/subunit d, ATP5PO/subunit OSCP. ATP synthase complex consists of a soluble F(1) head domain (subunits alpha(3) and beta(3)) - the catalytic core - and a membrane F(0) domain - the membrane proton channel (subunits c, a, 8, e, f, g, k and j). These two domains are linked by a central stalk (subunits gamma, delta, and epsilon) rotating inside the F1 region and a stationary peripheral stalk (subunits F6, b, d, and OSCP).

It is found in the mitochondrion membrane. Subunit 8, of the mitochondrial membrane ATP synthase complex (F(1)F(0) ATP synthase or Complex V) that produces ATP from ADP in the presence of a proton gradient across the membrane which is generated by electron transport complexes of the respiratory chain. ATP synthase complex consist of a soluble F(1) head domain - the catalytic core - and a membrane F(1) domain - the membrane proton channel. These two domains are linked by a central stalk rotating inside the F(1) region and a stationary peripheral stalk. During catalysis, ATP synthesis in the catalytic domain of F(1) is coupled via a rotary mechanism of the central stalk subunits to proton translocation. In vivo, can only synthesize ATP although its ATP hydrolase activity can be activated artificially in vitro. Part of the complex F(0) domain. This is ATP synthase F(0) complex subunit 8 from Chaetura pelagica (Chimney swift).